The sequence spans 952 residues: Leucine--tRNA ligase (952 aa).

The 'HIGH' region motif lies at Pro66–His77. The 'KMSKS' region motif lies at Lys722 to Ser726. Lys725 contacts ATP.

Belongs to the class-I aminoacyl-tRNA synthetase family.

The protein localises to the cytoplasm. The enzyme catalyses tRNA(Leu) + L-leucine + ATP = L-leucyl-tRNA(Leu) + AMP + diphosphate. The protein is Leucine--tRNA ligase of Corynebacterium glutamicum (strain R).